The following is a 509-amino-acid chain: Pancreatic secretory granule membrane major glycoprotein GP2 (509 aa).

The signal sequence occupies residues 1-21; it reads MVGSYVLWLALASCILTLASP. The segment at 36-56 is D10C; it reads DPCQNYTLLDEPSRSTENTEG. Intrachain disulfides connect cysteine 38/cysteine 132, cysteine 60/cysteine 147, cysteine 82/cysteine 120, cysteine 88/cysteine 152, cysteine 113/cysteine 121, cysteine 162/cysteine 172, cysteine 166/cysteine 181, cysteine 183/cysteine 213, cysteine 201/cysteine 292, and cysteine 233/cysteine 256. Residues asparagine 40, asparagine 97, and asparagine 109 are each glycosylated (N-linked (GlcNAc...) asparagine). The region spanning 158–202 is the EGF-like domain; that stretch reads ATDKCKNLCRPEEACSFLNGTWDCFCRSDLNSSDVHSLQPRLNCG. Residues asparagine 176, asparagine 188, and asparagine 232 are each glycosylated (N-linked (GlcNAc...) asparagine). Residues 200–293 are ZP-N; it reads NCGAKEIQVS…TILNINFQCA (94 aa). One can recognise a ZP domain in the interval 200-456; sequence NCGAKEIQVS…PCCSRSQQRS (257 aa). Residues asparagine 263 and asparagine 314 are each glycosylated (N-linked (GlcNAc...) asparagine). Positions 294 to 317 are flexible ZP-N/ZP-C linker; that stretch reads YPLDMKVSLQTALHPIVSSLNISV. The segment at 318 to 329 is internal hydrophobic patch (IHP); the sequence is DGEGEFTVRMAL. The segment at 318–456 is ZP-C; the sequence is DGEGEFTVRM…PCCSRSQQRS (139 aa). Cystine bridges form between cysteine 373–cysteine 433, cysteine 394–cysteine 449, and cysteine 438–cysteine 445. An external hydrophobic patch (EHP) region spans residues 463–471; the sequence is PARVLDLGP. Aspartate 484 is lipidated: GPI-anchor amidated aspartate. The propeptide at 485 to 509 is removed in mature form; it reads GTPSTAGFLLAWPMLLLPILLAELF.

As to quaternary structure, interacts with SYCN. Interacts with bacterial adhesin fimH. Post-translationally, N-glycosylated. As to expression, expressed in pancreas.

The protein resides in the zymogen granule membrane. It localises to the secreted. The protein localises to the cell membrane. It is found in the apical cell membrane. Its subcellular location is the membrane raft. The protein resides in the endosome. Its function is as follows. Functions as an intestinal M-cell transcytotic receptor specific of type-I-piliated bacteria that participates in the mucosal immune response toward these bacteria. At the apical membrane of M-cells it binds fimH, a protein of the bacteria type I pilus tip. Internalizes bound bacteria, like E.coli and S.typhimurium, from the lumen of the intestine and delivers them, through M-cells, to the underlying organized lymphoid follicles where they are captured by antigen-presenting dendritic cells to elicit a mucosal immune response. The sequence is that of Pancreatic secretory granule membrane major glycoprotein GP2 from Canis lupus familiaris (Dog).